Here is a 411-residue protein sequence, read N- to C-terminus: MARINDHFLKLKAGYLFPEIARRVQAFAAAHPEAQIIKMGIGDVTEPLPEACRTAMIRAVEEMGERATFRGYGPEQGYEWLRQAIARHDFQARGCDIDASEIFISDGSKCDCGNILDILGHDNTIAITDPVYPVYVDTNVMAGHTGPANERGEYEGLVYLPLTAENHFTASLPQQKVDVIYLCFPNNPTGAVATREHLQAWVDYARAHNSLILFDAAYEAYITEPGIPHSIYEIPGARECAIEFRSFSKTAGFTGTRCAFTVVPKSLRGQAADGSWVDLWSLWYRRQSTKFNGVAYIVQRGAEAVYSEAGQVQVRALVQFYLENARIIREQLATAGIQAYGGVNAPYVWVKAPEGLSSWEFFDKLLHTCHVVGTPGSGFGSAGEGYLRLSAFNSRANVEEAMRRIVSVFGS.

Substrate-binding residues include Y15 and G42. Residues Y72, S108–K109, Y132, N187, Y218, and S246–S248 contribute to the pyridoxal 5'-phosphate site. K109, Y132, and N187 together coordinate substrate. K249 carries the post-translational modification N6-(pyridoxal phosphate)lysine. R257 and N292 together coordinate pyridoxal 5'-phosphate. Positions 292 and 388 each coordinate substrate.

This sequence belongs to the class-I pyridoxal-phosphate-dependent aminotransferase family. LL-diaminopimelate aminotransferase subfamily. As to quaternary structure, homodimer. It depends on pyridoxal 5'-phosphate as a cofactor.

It catalyses the reaction (2S,6S)-2,6-diaminopimelate + 2-oxoglutarate = (S)-2,3,4,5-tetrahydrodipicolinate + L-glutamate + H2O + H(+). It functions in the pathway amino-acid biosynthesis; L-lysine biosynthesis via DAP pathway; LL-2,6-diaminopimelate from (S)-tetrahydrodipicolinate (aminotransferase route): step 1/1. In terms of biological role, involved in the synthesis of meso-diaminopimelate (m-DAP or DL-DAP), required for both lysine and peptidoglycan biosynthesis. Catalyzes the direct conversion of tetrahydrodipicolinate to LL-diaminopimelate. The chain is LL-diaminopimelate aminotransferase from Synechococcus sp. (strain JA-3-3Ab) (Cyanobacteria bacterium Yellowstone A-Prime).